The chain runs to 396 residues: Elongation factor Tu (396 aa).

The tr-type G domain maps to 10-205 (KPHVNIGTIG…ACDESIPDPV (196 aa)). A G1 region spans residues 19-26 (GHVDHGKT). 19-26 (GHVDHGKT) provides a ligand contact to GTP. Position 26 (T26) interacts with Mg(2+). A G2 region spans residues 62–66 (GITIN). The segment at 83–86 (DAPG) is G3. Residues 83–87 (DAPGH) and 138–141 (NKCD) each bind GTP. The segment at 138 to 141 (NKCD) is G4. The segment at 175-177 (SAL) is G5.

This sequence belongs to the TRAFAC class translation factor GTPase superfamily. Classic translation factor GTPase family. EF-Tu/EF-1A subfamily. Monomer.

It is found in the cytoplasm. The catalysed reaction is GTP + H2O = GDP + phosphate + H(+). In terms of biological role, GTP hydrolase that promotes the GTP-dependent binding of aminoacyl-tRNA to the A-site of ribosomes during protein biosynthesis. The protein is Elongation factor Tu of Corynebacterium kroppenstedtii (strain DSM 44385 / JCM 11950 / CIP 105744 / CCUG 35717).